The sequence spans 573 residues: Threonine--tRNA ligase (573 aa).

Residues 174–474 are catalytic; it reads DHRRINKILE…LLEQTKGALD (301 aa). Cys-268, His-319, and His-451 together coordinate Zn(2+).

This sequence belongs to the class-II aminoacyl-tRNA synthetase family. As to quaternary structure, homodimer. Zn(2+) is required as a cofactor.

It localises to the cytoplasm. The catalysed reaction is tRNA(Thr) + L-threonine + ATP = L-threonyl-tRNA(Thr) + AMP + diphosphate + H(+). In terms of biological role, catalyzes the attachment of threonine to tRNA(Thr) in a two-step reaction: L-threonine is first activated by ATP to form Thr-AMP and then transferred to the acceptor end of tRNA(Thr). Also edits incorrectly charged L-seryl-tRNA(Thr). This chain is Threonine--tRNA ligase, found in Mycoplasmoides gallisepticum (strain R(low / passage 15 / clone 2)) (Mycoplasma gallisepticum).